The sequence spans 484 residues: uncharacterized protein (484 aa).

This sequence to M.thermoautotrophicum MTH1153.

This is an uncharacterized protein from Methanocaldococcus jannaschii (strain ATCC 43067 / DSM 2661 / JAL-1 / JCM 10045 / NBRC 100440) (Methanococcus jannaschii).